A 330-amino-acid polypeptide reads, in one-letter code: Protein RfbI (330 aa).

The region spanning 3–89 (HIIKIFPSNI…ELNAHFFPEL (87 aa)) is the 2Fe-2S ferredoxin-type domain. 3 residues coordinate [2Fe-2S] cluster: Cys37, Cys42, and Cys45. In terms of domain architecture, FAD-binding FR-type spans 94-192 (KKIVPCKVNS…EGPCGTFFIR (99 aa)).

The cofactor is [2Fe-2S] cluster.

It functions in the pathway bacterial outer membrane biogenesis; LPS O-antigen biosynthesis. The sequence is that of Protein RfbI (rfbI) from Salmonella typhimurium (strain LT2 / SGSC1412 / ATCC 700720).